The chain runs to 111 residues: Nascent polypeptide-associated complex protein (111 aa).

The 70-residue stretch at 3–72 (GMNPRQMKKL…EEVREVLEIS (70 aa)) folds into the NAC-A/B domain.

Belongs to the NAC-alpha family. Homodimer. Interacts with the ribosome. Binds ribosomal RNA.

Functionally, contacts the emerging nascent chain on the ribosome. The polypeptide is Nascent polypeptide-associated complex protein (Thermococcus kodakarensis (strain ATCC BAA-918 / JCM 12380 / KOD1) (Pyrococcus kodakaraensis (strain KOD1))).